The following is a 236-amino-acid chain: Leucyl/phenylalanyl-tRNA--protein transferase (236 aa).

The protein belongs to the L/F-transferase family.

The protein resides in the cytoplasm. It carries out the reaction N-terminal L-lysyl-[protein] + L-leucyl-tRNA(Leu) = N-terminal L-leucyl-L-lysyl-[protein] + tRNA(Leu) + H(+). It catalyses the reaction N-terminal L-arginyl-[protein] + L-leucyl-tRNA(Leu) = N-terminal L-leucyl-L-arginyl-[protein] + tRNA(Leu) + H(+). The enzyme catalyses L-phenylalanyl-tRNA(Phe) + an N-terminal L-alpha-aminoacyl-[protein] = an N-terminal L-phenylalanyl-L-alpha-aminoacyl-[protein] + tRNA(Phe). Functions in the N-end rule pathway of protein degradation where it conjugates Leu, Phe and, less efficiently, Met from aminoacyl-tRNAs to the N-termini of proteins containing an N-terminal arginine or lysine. In Vibrio parahaemolyticus serotype O3:K6 (strain RIMD 2210633), this protein is Leucyl/phenylalanyl-tRNA--protein transferase.